A 71-amino-acid polypeptide reads, in one-letter code: Lantibiotic Flvbeta.c (71 aa).

A propeptide spans 1-33 (MENKFDMEKFKKLAAVVSEDELDTLLDETTVGA) (cleaved by FlvT). Positions 35–39 (SSNDC) form a cross-link, lanthionine (Ser-Cys); by FlvM2. The residue at position 36 (S36) is a 2,3-didehydroalanine (Ser); by FlvM2. 3 cross-links (beta-methyllanthionine (Thr-Cys); by FlvM2) span residues 54–60 (TSKFDWC), 62–65 (TGAC), and 66–69 (TTSC).

In terms of processing, contains LL-lanthionine and DL-beta-methyllanthionine, when coepressed in E.coli with the flavecin synthetase FlvM2.

The protein localises to the secreted. Its function is as follows. Lanthionine-containing peptide antibiotic (lantibiotic) that is probably active on Gram-positive bacteria, since its analog [Del1]Flvbeta.c shows antibacterial activity against M.luteus. This activity is not synergistically enhanced by [Del2]Flvalpha.a, an analog of Flvalpha.a, which is encoded by the same operon than Flvbeta.c. The bactericidal activity of lantibiotics is based on depolarization of energized bacterial cytoplasmic membranes, initiated by the formation of aqueous transmembrane pores. The protein is Lantibiotic Flvbeta.c of Ruminococcus flavefaciens.